We begin with the raw amino-acid sequence, 295 residues long: Apolipoprotein E (295 aa).

An N-terminal signal peptide occupies residues 1–18 (MKVLWAALLVTFLAGCQA). 6 consecutive repeat copies span residues 80–101 (TLMD…EQLS), 102–123 (PVAE…ARLG), 124–145 (ADME…AMLG), 146–167 (QSTE…KRLL), 193–211 (TVGS…AKLR), and 212–233 (ARME…EQVA). The interval 80–233 (TLMDETMKEL…RLDEVKEQVA (154 aa)) is 6 X 22 AA approximate tandem repeats. Met143 is modified (methionine sulfoxide). Position 147 is a phosphoserine (Ser147). The tract at residues 158-168 (HLRKLRKRLLR) is LDL and other lipoprotein receptors binding. Position 162-165 (162-165 (LRKR)) interacts with heparin. Residues 191–268 (AATVGSLASQ…SWFEPLVEDM (78 aa)) form a lipid-binding and lipoprotein association region. The homooligomerization stretch occupies residues 244-295 (QQISLQAEAFQARLKSWFEPLVEDMQRQWAGLVEKVQAAVGASTAPVPSDNH). Residues 256-268 (RLKSWFEPLVEDM) form a specificity for association with VLDL region.

The protein belongs to the apolipoprotein A1/A4/E family. As to quaternary structure, homotetramer. May interact with ABCA1; functionally associated with ABCA1 in the biogenesis of HDLs. May interact with APP/A4 amyloid-beta peptide; the interaction is extremely stable in vitro but its physiological significance is unclear. May interact with MAPT. May interact with MAP2. In the cerebrospinal fluid, interacts with secreted SORL1. Interacts with PMEL; this allows the loading of PMEL luminal fragment on ILVs to induce fibril nucleation. Post-translationally, APOE exists as multiple glycosylated and sialylated glycoforms within cells and in plasma. The extent of glycosylation and sialylation are tissue and context specific. In terms of processing, glycated in plasma VLDL. Phosphorylated by FAM20C in the extracellular medium.

It localises to the secreted. Its subcellular location is the extracellular space. The protein resides in the extracellular matrix. The protein localises to the extracellular vesicle. It is found in the endosome. It localises to the multivesicular body. In terms of biological role, APOE is an apolipoprotein, a protein associating with lipid particles, that mainly functions in lipoprotein-mediated lipid transport between organs via the plasma and interstitial fluids. APOE is a core component of plasma lipoproteins and is involved in their production, conversion and clearance. Apolipoproteins are amphipathic molecules that interact both with lipids of the lipoprotein particle core and the aqueous environment of the plasma. As such, APOE associates with chylomicrons, chylomicron remnants, very low density lipoproteins (VLDL) and intermediate density lipoproteins (IDL) but shows a preferential binding to high-density lipoproteins (HDL). It also binds a wide range of cellular receptors including the LDL receptor/LDLR, the LDL receptor-related proteins LRP1, LRP2 and LRP8 and the very low-density lipoprotein receptor/VLDLR that mediate the cellular uptake of the APOE-containing lipoprotein particles. Finally, APOE also has a heparin-binding activity and binds heparan-sulfate proteoglycans on the surface of cells, a property that supports the capture and the receptor-mediated uptake of APOE-containing lipoproteins by cells. A main function of APOE is to mediate lipoprotein clearance through the uptake of chylomicrons, VLDLs, and HDLs by hepatocytes. APOE is also involved in the biosynthesis by the liver of VLDLs as well as their uptake by peripheral tissues ensuring the delivery of triglycerides and energy storage in muscle, heart and adipose tissues. By participating in the lipoprotein-mediated distribution of lipids among tissues, APOE plays a critical role in plasma and tissues lipid homeostasis. APOE is also involved in two steps of reverse cholesterol transport, the HDLs-mediated transport of cholesterol from peripheral tissues to the liver, and thereby plays an important role in cholesterol homeostasis. First, it is functionally associated with ABCA1 in the biogenesis of HDLs in tissues. Second, it is enriched in circulating HDLs and mediates their uptake by hepatocytes. APOE also plays an important role in lipid transport in the central nervous system, regulating neuron survival and sprouting. This Macaca mulatta (Rhesus macaque) protein is Apolipoprotein E (APOE).